We begin with the raw amino-acid sequence, 293 residues long: Acetylglutamate kinase (293 aa).

Residues 60-61, R82, and N188 contribute to the substrate site; that span reads GG.

It belongs to the acetylglutamate kinase family. ArgB subfamily.

The protein resides in the cytoplasm. It catalyses the reaction N-acetyl-L-glutamate + ATP = N-acetyl-L-glutamyl 5-phosphate + ADP. It functions in the pathway amino-acid biosynthesis; L-arginine biosynthesis; N(2)-acetyl-L-ornithine from L-glutamate: step 2/4. In terms of biological role, catalyzes the ATP-dependent phosphorylation of N-acetyl-L-glutamate. The chain is Acetylglutamate kinase from Methanothermobacter thermautotrophicus (strain ATCC 29096 / DSM 1053 / JCM 10044 / NBRC 100330 / Delta H) (Methanobacterium thermoautotrophicum).